We begin with the raw amino-acid sequence, 151 residues long: Lipoprotein signal peptidase (151 aa).

2 helical membrane-spanning segments follow: residues 61–81 and 88–107; these read GSQWLGWISLLVSVGLLIWIG and SRWQAAAAAFLLAGSVGNGI. Residues Asp117 and Asp133 contribute to the active site. A helical membrane pass occupies residues 128-148; it reads VFNLADVAINLAVLCLLIEAI.

It belongs to the peptidase A8 family.

The protein localises to the cell inner membrane. It carries out the reaction Release of signal peptides from bacterial membrane prolipoproteins. Hydrolyzes -Xaa-Yaa-Zaa-|-(S,diacylglyceryl)Cys-, in which Xaa is hydrophobic (preferably Leu), and Yaa (Ala or Ser) and Zaa (Gly or Ala) have small, neutral side chains.. It participates in protein modification; lipoprotein biosynthesis (signal peptide cleavage). Its function is as follows. This protein specifically catalyzes the removal of signal peptides from prolipoproteins. The chain is Lipoprotein signal peptidase from Synechococcus sp. (strain RCC307).